The primary structure comprises 254 residues: Proteasome subunit alpha type-4 (254 aa).

At Thr-60 the chain carries Phosphothreonine. A disordered region spans residues Gln-235–His-254. Residues Glu-237–Lys-248 show a composition bias toward basic and acidic residues.

The protein belongs to the peptidase T1A family. The 26S proteasome consists of a 20S proteasome core and two 19S regulatory subunits. The 20S proteasome core is composed of 28 subunits that are arranged in four stacked rings, resulting in a barrel-shaped structure. The two end rings are each formed by seven alpha subunits, and the two central rings are each formed by seven beta subunits. The catalytic chamber with the active sites is on the inside of the barrel. Interacts with CIC1.

The protein localises to the cytoplasm. Its subcellular location is the nucleus. Functionally, the proteasome degrades poly-ubiquitinated proteins in the cytoplasm and in the nucleus. It is essential for the regulated turnover of proteins and for the removal of misfolded proteins. The proteasome is a multicatalytic proteinase complex that is characterized by its ability to cleave peptides with Arg, Phe, Tyr, Leu, and Glu adjacent to the leaving group at neutral or slightly basic pH. It has an ATP-dependent proteolytic activity. This is Proteasome subunit alpha type-4 (PRE6) from Saccharomyces cerevisiae (strain ATCC 204508 / S288c) (Baker's yeast).